A 558-amino-acid chain; its full sequence is Glypican-1 (558 aa).

The first 23 residues, 1 to 23 (MELRARGWWLLCAAAALVACTRG), serve as a signal peptide directing secretion. Disulfide bonds link cysteine 32–cysteine 68, cysteine 62–cysteine 256, cysteine 69–cysteine 259, cysteine 191–cysteine 343, cysteine 246–cysteine 279, cysteine 268–cysteine 415, and cysteine 272–cysteine 401. Asparagine 79 and asparagine 116 each carry an N-linked (GlcNAc...) asparagine glycan. Residues 478 to 531 (FQDASDDGSGSGSGGGCPDDACGRRVSKKSSSSRTPLIHALPGLSEQEGQKTSA) form a disordered region. O-linked (Xyl...) (heparan sulfate) serine glycosylation is found at serine 486, serine 488, and serine 490. Serine 530 carries GPI-anchor amidated serine lipidation. The propeptide at 531–558 (AATRPEPHYFFLLFLFTLVLAAARPRWR) is removed in mature form.

It belongs to the glypican family. In terms of processing, S-nitrosylated in a Cu(2+)-dependent manner. Nitric acid (NO) is released from the nitrosylated cysteines by ascorbate or by some other reducing agent, in a Cu(2+) or Zn(2+) dependent manner. This free nitric oxide is then capable of cleaving the heparan sulfate side chains. Post-translationally, N- and O-glycosylated. N-glycosylation is mainly of the complex type containing sialic acid. O-glycosylated with heparan sulfate. The heparan sulfate chains can be cleaved either by the action of heparanase or, degraded by a deaminative process that uses nitric oxide (NO) released from the S-nitrosylated cysteines. This process is triggered by ascorbate, or by some other reducing agent, in a Cu(2+)- or Zn(2+) dependent manner. Cu(2+) ions are provided by ceruloproteins such as APP, PRNP or CP which associate with GCP1 in intracellular compartments or lipid rafts. This cell-associated glypican is further processed to give rise to a medium-released species. As to expression, nervous system.

The protein localises to the cell membrane. It is found in the endosome. The protein resides in the secreted. Its subcellular location is the extracellular space. Cell surface proteoglycan that bears heparan sulfate. May act as a catalyst in increasing the rate of conversion of prion protein PRPN(C) to PRNP(Sc) via associating (via the heparan sulfate side chains) with both forms of PRPN, targeting them to lipid rafts and facilitating their interaction. Required for proper skeletal muscle differentiation by sequestering FGF2 in lipid rafts preventing its binding to receptors (FGFRs) and inhibiting the FGF-mediated signaling. Binds Cu(2+) or Zn(2+) ions. Binds, via the heparan sulfate side chains, alpha-4 (V) collagen and participates in Schwann cell myelination. The sequence is that of Glypican-1 (Gpc1) from Rattus norvegicus (Rat).